Consider the following 247-residue polypeptide: Probable chemoreceptor glutamine deamidase CheD (247 aa).

A disordered region spans residues 204–247; the sequence is KRPAAPQPARPRIELFGGRGTAPGAGSPSAGSPYAANLSRKQEA. Over residues 227–239 the composition is skewed to low complexity; the sequence is GAGSPSAGSPYAA.

Belongs to the CheD family.

It catalyses the reaction L-glutaminyl-[protein] + H2O = L-glutamyl-[protein] + NH4(+). Its function is as follows. Probably deamidates glutamine residues to glutamate on methyl-accepting chemotaxis receptors (MCPs), playing an important role in chemotaxis. This is Probable chemoreceptor glutamine deamidase CheD from Burkholderia orbicola (strain AU 1054).